Consider the following 463-residue polypeptide: ATP synthase subunit beta (463 aa).

Position 152–159 (152–159 (GGAGVGKT)) interacts with ATP.

Belongs to the ATPase alpha/beta chains family. In terms of assembly, F-type ATPases have 2 components, CF(1) - the catalytic core - and CF(0) - the membrane proton channel. CF(1) has five subunits: alpha(3), beta(3), gamma(1), delta(1), epsilon(1). CF(0) has three main subunits: a(1), b(2) and c(9-12). The alpha and beta chains form an alternating ring which encloses part of the gamma chain. CF(1) is attached to CF(0) by a central stalk formed by the gamma and epsilon chains, while a peripheral stalk is formed by the delta and b chains.

The protein resides in the cell inner membrane. The catalysed reaction is ATP + H2O + 4 H(+)(in) = ADP + phosphate + 5 H(+)(out). Its function is as follows. Produces ATP from ADP in the presence of a proton gradient across the membrane. The catalytic sites are hosted primarily by the beta subunits. The chain is ATP synthase subunit beta from Shewanella sp. (strain ANA-3).